Reading from the N-terminus, the 328-residue chain is WUSCHEL-related homeobox 6 (328 aa).

Residues 1-11 are compositionally biased toward polar residues; that stretch reads MEGSSNSPDRQ. The segment at 1–45 is disordered; that stretch reads MEGSSNSPDRQSSGGSPPEERGGGGSGGGGGRSAAGEPVRSRWTP. Positions 23–33 are enriched in gly residues; the sequence is GGGSGGGGGRS. A DNA-binding region (homeobox; WUS-type) is located at residues 38 to 102; that stretch reads PVRSRWTPKP…NRRSRSRRRQ (65 aa).

The protein belongs to the WUS homeobox family.

It localises to the nucleus. Functionally, transcription factor which may be involved in developmental processes. The chain is WUSCHEL-related homeobox 6 (WOX6) from Oryza sativa subsp. japonica (Rice).